The following is a 188-amino-acid chain: Transcription factor FapR (188 aa).

It belongs to the FapR family.

Functionally, transcriptional factor involved in regulation of membrane lipid biosynthesis by repressing genes involved in fatty acid and phospholipid metabolism. The sequence is that of Transcription factor FapR from Bacillus velezensis (strain DSM 23117 / BGSC 10A6 / LMG 26770 / FZB42) (Bacillus amyloliquefaciens subsp. plantarum).